A 1480-amino-acid chain; its full sequence is Cystic fibrosis transmembrane conductance regulator (1480 aa).

Topologically, residues Met-1–Phe-77 are cytoplasmic. The chain crosses the membrane as a helical span at residues Phe-78 to Gln-98. Residues Phe-81 to Leu-365 form the ABC transmembrane type-1 1 domain. Residues Pro-99–Tyr-122 lie on the Extracellular side of the membrane. The helical transmembrane segment at Leu-123–His-146 threads the bilayer. Topologically, residues His-147–Leu-195 are cytoplasmic. Residues Ala-196–Trp-216 form a helical membrane-spanning segment. The Extracellular segment spans residues Glu-217–Ser-222. A helical membrane pass occupies residues Ala-223 to Met-243. The Cytoplasmic segment spans residues Met-244 to Lys-298. A helical transmembrane segment spans residues Ala-299–Phe-319. Residues Leu-320–Thr-339 are Extracellular-facing. The chain crosses the membrane as a helical span at residues Ile-340–Val-358. Residues Gln-359–Ser-858 are Cytoplasmic-facing. ATP is bound by residues Trp-401, Ser-434, Gly-458–Thr-465, and Gln-493. In terms of domain architecture, ABC transporter 1 spans Asn-423–Gly-646. Cys-524 is lipidated: S-palmitoyl cysteine. 2 positions are modified to phosphoserine: Ser-549 and Ser-660. The interval Ser-654–Glu-831 is disordered R region. Ser-670 is subject to Phosphoserine; by PKA. Ser-686 is modified (phosphoserine). A Glycyl lysine isopeptide (Lys-Gly) (interchain with G-Cter in ubiquitin) cross-link involves residue Lys-688. 2 positions are modified to phosphoserine: Ser-700 and Ser-712. Thr-717 carries the phosphothreonine modification. A phosphoserine mark is found at Ser-737, Ser-753, Ser-768, Ser-790, Ser-795, and Ser-813. A helical transmembrane segment spans residues Leu-859–Val-879. An ABC transmembrane type-1 2 domain is found at Leu-859–Ser-1155. Over Val-880 to Ile-918 the chain is Extracellular. Residues Asn-894 and Asn-900 are each glycosylated (N-linked (GlcNAc...) asparagine). Residues Tyr-919 to His-939 form a discontinuously helical membrane-spanning segment. The Cytoplasmic portion of the chain corresponds to Thr-940–Thr-990. A helical membrane pass occupies residues Ile-991–Leu-1011. Residues Gln-1012–Pro-1013 lie on the Extracellular side of the membrane. The helical transmembrane segment at Tyr-1014–Leu-1034 threads the bilayer. Residues Gln-1035–Thr-1095 are Cytoplasmic-facing. The chain crosses the membrane as a helical span at residues Leu-1096–Phe-1116. At Ile-1117–Gly-1130 the chain is on the extracellular side. A helical transmembrane segment spans residues Ile-1131 to Ile-1151. At Asp-1152–Leu-1480 the chain is on the cytoplasmic side. One can recognise an ABC transporter 2 domain in the interval Met-1210 to Pro-1443. Residues Tyr-1219 and Gly-1244–Ser-1251 contribute to the ATP site. The tract at residues Arg-1386–Leu-1480 is interaction with GORASP2. Cys-1395 is lipidated: S-palmitoyl cysteine. Ser-1444 and Ser-1456 each carry phosphoserine. The interval Pro-1451–Leu-1480 is disordered. Residues Glu-1470 to Leu-1480 are compositionally biased toward acidic residues. The PDZ-binding motif lies at Thr-1478 to Leu-1480.

It belongs to the ABC transporter superfamily. ABCC family. CFTR transporter (TC 3.A.1.202) subfamily. In terms of assembly, monomer; does not require oligomerization for channel activity. May form oligomers in the membrane. Interacts with SLC26A3, SLC26A6 and NHERF1. Interacts with SHANK2. Interacts with MYO6. Interacts (via C-terminus) with GOPC (via PDZ domain); this promotes CFTR internalization and thereby decreases channel activity. Interacts with SLC4A7 through NHERF1. Found in a complex with MYO5B and RAB11A. Interacts with ANO1. Interacts with SLC26A8. Interacts with AHCYL1; the interaction increases CFTR activity. Interacts with CSE1L. The core-glycosylated form interacts with GORASP2 (via PDZ GRASP-type 1 domain) in respone to ER stress. Interacts with MARCHF2; the interaction leads to CFTR ubiqtuitination and degradation. Interacts with ADGRG2. Post-translationally, N-glycosylated. Phosphorylated; cAMP treatment promotes phosphorylation and activates the channel. Dephosphorylation decreases the ATPase activity (in vitro). Phosphorylation at PKA sites activates the channel. Phosphorylation at PKC sites enhances the response to phosphorylation by PKA. Phosphorylated by AMPK; this inhibits channel activity. In terms of processing, ubiquitinated, leading to its degradation in the lysosome. Deubiquitination by USP10 in early endosomes enhances its endocytic recycling to the cell membrane. Ubiquitinated by RNF185 during ER stress. Ubiquitinated by MARCHF2.

The protein resides in the apical cell membrane. It localises to the early endosome membrane. It is found in the cell membrane. Its subcellular location is the recycling endosome membrane. The protein localises to the endoplasmic reticulum membrane. The protein resides in the nucleus. It carries out the reaction ATP + H2O + closed Cl(-) channel = ADP + phosphate + open Cl(-) channel.. The catalysed reaction is chloride(in) = chloride(out). It catalyses the reaction hydrogencarbonate(in) = hydrogencarbonate(out). The enzyme catalyses ATP + H2O = ADP + phosphate + H(+). Its function is as follows. Epithelial ion channel that plays an important role in the regulation of epithelial ion and water transport and fluid homeostasis. Mediates the transport of chloride ions across the cell membrane. Possesses an intrinsic ATPase activity and utilizes ATP to gate its channel; the passive flow of anions through the channel is gated by cycles of ATP binding and hydrolysis by the ATP-binding domains. The ion channel is also permeable to HCO(3)(-); selectivity depends on the extracellular chloride concentration. Exerts its function also by modulating the activity of other ion channels and transporters. Contributes to the regulation of the pH and the ion content of the epithelial fluid layer. Modulates the activity of the epithelial sodium channel (ENaC) complex, in part by regulating the cell surface expression of the ENaC complex. May regulate bicarbonate secretion and salvage in epithelial cells by regulating the transporter SLC4A7. Can inhibit the chloride channel activity of ANO1. Plays a role in the chloride and bicarbonate homeostasis during sperm epididymal maturation and capacitation. This Nomascus leucogenys (Northern white-cheeked gibbon) protein is Cystic fibrosis transmembrane conductance regulator.